A 156-amino-acid chain; its full sequence is Flagellar assembly factor FliW (156 aa).

This sequence belongs to the FliW family. As to quaternary structure, interacts with translational regulator CsrA and flagellin(s).

Its subcellular location is the cytoplasm. Acts as an anti-CsrA protein, binds CsrA and prevents it from repressing translation of its target genes, one of which is flagellin. Binds to flagellin and participates in the assembly of the flagellum. In Lachnoclostridium phytofermentans (strain ATCC 700394 / DSM 18823 / ISDg) (Clostridium phytofermentans), this protein is Flagellar assembly factor FliW.